We begin with the raw amino-acid sequence, 292 residues long: Xanthine dehydrogenase FAD-binding subunit (292 aa).

The 176-residue stretch at 1-176 (MFDFASYHRA…VAFHFPPQPK (176 aa)) folds into the FAD-binding PCMH-type domain. Residues 27–34 (KLLAGGTD), 109–113 (ATYGG), isoleucine 165, and phenylalanine 184 contribute to the FAD site.

As to quaternary structure, heterotrimer of XdhA, XdhB and XdhC. Requires FAD as cofactor.

It carries out the reaction xanthine + NAD(+) + H2O = urate + NADH + H(+). It catalyses the reaction hypoxanthine + NAD(+) + H2O = xanthine + NADH + H(+). It functions in the pathway purine metabolism; hypoxanthine degradation; urate from hypoxanthine: step 1/2. It participates in purine metabolism; hypoxanthine degradation; urate from hypoxanthine: step 2/2. Functionally, presumed to be a dehydrogenase, but possibly an oxidase. Participates in limited purine salvage (requires aspartate) but does not support aerobic growth on purines as the sole carbon source (purine catabolism). In Escherichia coli O157:H7, this protein is Xanthine dehydrogenase FAD-binding subunit (xdhB).